The chain runs to 924 residues: Translation initiation factor IF-2 (924 aa).

Residues 118 to 325 (PSTAHREELA…QAPVVGGVRL (208 aa)) are disordered. 2 stretches are compositionally biased toward pro residues: residues 150–173 (APHPGHPGMPTGPHPGPAPKPGGR) and 192–201 (IPRPPAPRPS). The span at 202 to 212 (ASPSSMSPRPG) shows a compositional bias: low complexity. Positions 229 to 295 (RPGGGRPGAP…GAAGAFGRPG (67 aa)) are enriched in gly residues. Basic residues predominate over residues 299–308 (RRGRKSKRQK). Residues 420 to 591 (VRPPVVTVMG…AVLLTADAAL (172 aa)) form the tr-type G domain. The G1 stretch occupies residues 429 to 436 (GHVDHGKT). 429 to 436 (GHVDHGKT) serves as a coordination point for GTP. Residues 454-458 (GITQH) are G2. The segment at 479-482 (DTPG) is G3. Residues 479-483 (DTPGH) and 533-536 (NKID) each bind GTP. Residues 533–536 (NKID) form a G4 region. Residues 569-571 (SAK) form a G5 region.

It belongs to the TRAFAC class translation factor GTPase superfamily. Classic translation factor GTPase family. IF-2 subfamily.

Its subcellular location is the cytoplasm. In terms of biological role, one of the essential components for the initiation of protein synthesis. Protects formylmethionyl-tRNA from spontaneous hydrolysis and promotes its binding to the 30S ribosomal subunits. Also involved in the hydrolysis of GTP during the formation of the 70S ribosomal complex. In Mycobacterium leprae (strain Br4923), this protein is Translation initiation factor IF-2.